A 378-amino-acid polypeptide reads, in one-letter code: tRNA-specific 2-thiouridylase MnmA (378 aa).

Residues 6-13 (AMSGGVDS) and leucine 32 each bind ATP. The active-site Nucleophile is the cysteine 101. Cysteine 101 and cysteine 199 are disulfide-bonded. Glycine 125 lines the ATP pocket. The interaction with tRNA stretch occupies residues 148–150 (KDQ). The active-site Cysteine persulfide intermediate is cysteine 199.

This sequence belongs to the MnmA/TRMU family.

The protein localises to the cytoplasm. It carries out the reaction S-sulfanyl-L-cysteinyl-[protein] + uridine(34) in tRNA + AH2 + ATP = 2-thiouridine(34) in tRNA + L-cysteinyl-[protein] + A + AMP + diphosphate + H(+). Its function is as follows. Catalyzes the 2-thiolation of uridine at the wobble position (U34) of tRNA, leading to the formation of s(2)U34. The chain is tRNA-specific 2-thiouridylase MnmA from Renibacterium salmoninarum (strain ATCC 33209 / DSM 20767 / JCM 11484 / NBRC 15589 / NCIMB 2235).